The primary structure comprises 827 residues: Discs large homolog 1-like protein (827 aa).

2 disordered regions span residues His-38–Pro-61 and Ser-102–Pro-133. The span at Gly-44–Asp-56 shows a compositional bias: polar residues. 3 PDZ domains span residues Glu-159–Lys-246, Glu-254–Asn-341, and Lys-403–Pro-484. In terms of domain architecture, SH3 spans Lys-518 to Glu-588. Positions Val-595–Gly-618 are disordered. The Guanylate kinase-like domain maps to Ser-637–Glu-812.

The protein belongs to the MAGUK family.

It localises to the membrane. In terms of biological role, may play a role in synapse assembly and function. The sequence is that of Discs large homolog 1-like protein (dlg1l) from Danio rerio (Zebrafish).